The sequence spans 320 residues: Serpentine receptor class gamma-15 (320 aa).

7 helical membrane passes run 29–49, 57–77, 85–105, 151–171, 197–217, 240–260, and 268–288; these read TISY…TILV, GSSF…IVFI, FLYV…SSLI, VSLV…IISP, LFQS…TSVT, IYIS…AFCT, and LFTA…VILF.

This sequence belongs to the nematode receptor-like protein srg family.

It is found in the membrane. This is Serpentine receptor class gamma-15 (srg-15) from Caenorhabditis elegans.